Reading from the N-terminus, the 347-residue chain is L-threonine 3-dehydrogenase (347 aa).

Cys-42 contacts Zn(2+). Catalysis depends on charge relay system residues Thr-44 and His-47. Zn(2+)-binding residues include His-67, Glu-68, Cys-97, Cys-100, Cys-103, and Cys-111. NAD(+) contacts are provided by residues Ile-180, Asp-200, Arg-205, 267–269 (LSL), and 292–293 (IT).

Belongs to the zinc-containing alcohol dehydrogenase family. As to quaternary structure, homotetramer. The cofactor is Zn(2+).

The protein localises to the cytoplasm. It catalyses the reaction L-threonine + NAD(+) = (2S)-2-amino-3-oxobutanoate + NADH + H(+). It participates in amino-acid degradation; L-threonine degradation via oxydo-reductase pathway; glycine from L-threonine: step 1/2. Its function is as follows. Catalyzes the NAD(+)-dependent oxidation of L-threonine to 2-amino-3-ketobutyrate. This is L-threonine 3-dehydrogenase from Bacillus velezensis (strain DSM 23117 / BGSC 10A6 / LMG 26770 / FZB42) (Bacillus amyloliquefaciens subsp. plantarum).